Consider the following 382-residue polypeptide: Mannitol-1-phosphate 5-dehydrogenase (382 aa).

Position 3–14 (3–14) interacts with NAD(+); sequence ALHFGAGNIGRG. K269 is modified (N6-acetyllysine).

This sequence belongs to the mannitol dehydrogenase family.

It carries out the reaction D-mannitol 1-phosphate + NAD(+) = beta-D-fructose 6-phosphate + NADH + H(+). The sequence is that of Mannitol-1-phosphate 5-dehydrogenase from Escherichia coli O127:H6 (strain E2348/69 / EPEC).